Here is a 112-residue protein sequence, read N- to C-terminus: Large ribosomal subunit protein eL30 (112 aa).

It belongs to the eukaryotic ribosomal protein eL30 family.

The chain is Large ribosomal subunit protein eL30 (RPL30) from Lupinus luteus (European yellow lupine).